The following is a 143-amino-acid chain: Putative glycerol transporter Lin0368 (143 aa).

A run of 4 helical transmembrane segments spans residues 6–26 (GMIG…PLAE), 27–47 (NYGI…MWFM), 60–80 (AAFV…DVFM), and 90–110 (LPTI…AAAI). Residues 118–143 (HEAKQEKTEPGMNIKEEERLNENQLV) form a disordered region.

The protein resides in the membrane. Could be involved in the glycerol uptake either via facilitated diffusion or active transport. The protein is Putative glycerol transporter Lin0368 of Listeria innocua serovar 6a (strain ATCC BAA-680 / CLIP 11262).